Consider the following 229-residue polypeptide: ATP synthase subunit a 3 (229 aa).

6 helical membrane-spanning segments follow: residues 25-45, 86-106, 111-131, 142-162, 181-201, and 202-222; these read ADAVSYTWLIIALLLLLSFLA, VATIGIFVLVSNLIGLIPGFF, NINTTAACAIVVFLSTHVVGI, FCGPILWLTPIMFFIEVIGHL, LVLIIFFGLAPFLVPLPMMLM, and GVLVSFIQAFVFMLLTMIYIQ.

The protein belongs to the ATPase A chain family. F-type ATPases have 2 components, CF(1) - the catalytic core - and CF(0) - the membrane proton channel. CF(1) has five subunits: alpha(3), beta(3), gamma(1), delta(1), epsilon(1). CF(0) has three main subunits: a(1), b(2) and c(9-12). The alpha and beta chains form an alternating ring which encloses part of the gamma chain. CF(1) is attached to CF(0) by a central stalk formed by the gamma and epsilon chains, while a peripheral stalk is formed by the delta and b chains.

It is found in the cell inner membrane. Functionally, key component of the proton channel; it plays a direct role in the translocation of protons across the membrane. This chain is ATP synthase subunit a 3, found in Pelobacter propionicus (strain DSM 2379 / NBRC 103807 / OttBd1).